A 77-amino-acid polypeptide reads, in one-letter code: Acyl carrier protein (77 aa).

The 76-residue stretch at 2–77 (ASIEKRIKEI…DAIDYITDHT (76 aa)) folds into the Carrier domain. Ser37 carries the post-translational modification O-(pantetheine 4'-phosphoryl)serine.

It belongs to the acyl carrier protein (ACP) family. Post-translationally, 4'-phosphopantetheine is transferred from CoA to a specific serine of apo-ACP by AcpS. This modification is essential for activity because fatty acids are bound in thioester linkage to the sulfhydryl of the prosthetic group.

The protein resides in the cytoplasm. It functions in the pathway lipid metabolism; fatty acid biosynthesis. Carrier of the growing fatty acid chain in fatty acid biosynthesis. The sequence is that of Acyl carrier protein from Geobacter sp. (strain M21).